The sequence spans 424 residues: UDP-N-acetylglucosamine 1-carboxyvinyltransferase (424 aa).

22 to 23 (KN) contributes to the phosphoenolpyruvate binding site. Arginine 93 contributes to the UDP-N-acetyl-alpha-D-glucosamine binding site. Cysteine 117 serves as the catalytic Proton donor. A 2-(S-cysteinyl)pyruvic acid O-phosphothioketal modification is found at cysteine 117. UDP-N-acetyl-alpha-D-glucosamine is bound by residues 162–165 (KVSV), aspartate 307, and isoleucine 329.

The protein belongs to the EPSP synthase family. MurA subfamily.

The protein resides in the cytoplasm. It catalyses the reaction phosphoenolpyruvate + UDP-N-acetyl-alpha-D-glucosamine = UDP-N-acetyl-3-O-(1-carboxyvinyl)-alpha-D-glucosamine + phosphate. It functions in the pathway cell wall biogenesis; peptidoglycan biosynthesis. In terms of biological role, cell wall formation. Adds enolpyruvyl to UDP-N-acetylglucosamine. The chain is UDP-N-acetylglucosamine 1-carboxyvinyltransferase from Glaesserella parasuis serovar 5 (strain SH0165) (Haemophilus parasuis).